The primary structure comprises 743 residues: Envelope glycoprotein H (743 aa).

Positions 1–23 (MRPGLPPYLTVFTVYLLSHLPSQ) are cleaved as a signal peptide. The Virion surface portion of the chain corresponds to 24–720 (RYGADAASEA…VVDATDSRLL (697 aa)). N-linked (GlcNAc...) asparagine; by host glycosylation is found at Asn-56, Asn-63, Asn-68, and Asn-193. Positions 218 to 281 (YLMDELRYVK…QTEKHELLVL (64 aa)) are interaction with gL. Residues Asn-642 and Asn-701 are each glycosylated (N-linked (GlcNAc...) asparagine; by host). A helical transmembrane segment spans residues 721 to 741 (MMSVYALSAIIGIYLLYRMLK). Topologically, residues 742–743 (TC) are intravirion.

The protein belongs to the herpesviridae glycoprotein H family. Interacts with glycoprotein L (gL); this interaction is necessary for the correct processing and cell surface expression of gH. The heterodimer gH/gL seems to interact with gB trimers during fusion. Forms the envelope pentamer complex (PC) composed of gH, gL, UL128, UL130, and UL131A. The pentamer interacts with host NRP2. Forms the envelope trimer complex composed of gH, gL, and gO. The trimer interacts with host PDGFRA. The trimer also interacts with host EPHA2. Interacts with UL116. In terms of processing, N-glycosylated, O-glycosylated, and sialylated.

The protein localises to the virion membrane. Its subcellular location is the host cell membrane. The protein resides in the host endosome membrane. In terms of biological role, the heterodimer glycoprotein H-glycoprotein L is required for the fusion of viral and plasma membranes leading to virus entry into the host cell. Following initial binding to host receptor, membrane fusion is mediated by the fusion machinery composed of gB and the heterodimer gH/gL. May also be involved in the fusion between the virion envelope and the outer nuclear membrane during virion morphogenesis. In human cytomegalovirus, forms two distincts complexes to mediate viral entry, a trimer and a pentamer at the surface of the virion envelope. The gH-gL-gO trimer is required for infection in fibroblasts by interacting with host PDGFRA, and in glioblastoma cells by interacting with host EPHA2. The gH-gL-UL128-UL130-UL131A pentamer is essential for viral entry in epithelial, endothelial and myeloid cells via interaction with host NRP2. This chain is Envelope glycoprotein H, found in Human cytomegalovirus (strain AD169) (HHV-5).